Consider the following 705-residue polypeptide: Elongation factor G (705 aa).

The tr-type G domain occupies His-7–Leu-287. GTP contacts are provided by residues Ala-16–Thr-23, Asp-84–His-88, and Asn-138–Asp-141.

It belongs to the TRAFAC class translation factor GTPase superfamily. Classic translation factor GTPase family. EF-G/EF-2 subfamily.

The protein resides in the cytoplasm. Its function is as follows. Catalyzes the GTP-dependent ribosomal translocation step during translation elongation. During this step, the ribosome changes from the pre-translocational (PRE) to the post-translocational (POST) state as the newly formed A-site-bound peptidyl-tRNA and P-site-bound deacylated tRNA move to the P and E sites, respectively. Catalyzes the coordinated movement of the two tRNA molecules, the mRNA and conformational changes in the ribosome. The chain is Elongation factor G from Bacteroides thetaiotaomicron (strain ATCC 29148 / DSM 2079 / JCM 5827 / CCUG 10774 / NCTC 10582 / VPI-5482 / E50).